We begin with the raw amino-acid sequence, 470 residues long: Dendritic cell-specific transmembrane protein (470 aa).

Topologically, residues 1-34 are cytoplasmic; that stretch reads MGIWTSGTDIFLSLWEIYVSPRSPGWMDFIQHLG. Residues 35 to 55 traverse the membrane as a helical segment; it reads VCCLVALISVGLLSVAACWFL. Residues 56-57 lie on the Extracellular side of the membrane; sequence PS. A helical transmembrane segment spans residues 58–78; it reads IIAAAASWIITCVLLCCSKHA. The Cytoplasmic portion of the chain corresponds to 79–97; it reads RCFILLVFLSCGLREGRNA. Residues 98–118 form a helical membrane-spanning segment; sequence LIAAGTGIVILGHVENIFHNF. Over 119-209 the chain is Extracellular; sequence KGLLDGMTCN…MATTTEVLSS (91 aa). A helical membrane pass occupies residues 210–230; the sequence is LGQKLLAFAGLSLVLLGTGLF. The Cytoplasmic portion of the chain corresponds to 231–292; sequence MKRFLGPCGW…FWPTPKERKN (62 aa). Residues 293 to 313 form a helical membrane-spanning segment; that stretch reads LGLFFLPILIHLCIWVLFAAV. Over 314 to 376 the chain is Extracellular; it reads DYLLYRLIFS…PKPKFLLSET (63 aa). Residues 377-397 traverse the membrane as a helical segment; the sequence is WVPLSVILLILVMLGLLSSIL. The Cytoplasmic portion of the chain corresponds to 398–470; that stretch reads MQLKILVSAS…QMDMASADKS (73 aa).

As to quaternary structure, monomer. Homodimer. Isoform 1 interacts (via the C-terminus cytoplasmic tail) with OS9 isoform 1 (via the C-terminus tail); the interaction induces DCSTAMP redistribution to the endoplasmic reticulum-Golgi intermediate compartment. Isoform 1 interacts (via the C-terminus cytoplasmic tail) with OS9 isoform 2 (via the C-terminus tail). Interacts with CREB3. Glycosylated. In terms of tissue distribution, preferentially expressed by dendritic cells (DCs). Detected in both immature and mature DCs. Highly expressed in lymph nodes, lung, kidney and liver. Expressed at lower levels in pancreas, bone marrow, spleen, leukocytes, in freshly isolated peripheral blood mononuclear cells (PBMC) and B-cells. Not expressed in freshly isolated monocytes.

Its subcellular location is the cell membrane. It localises to the endoplasmic reticulum membrane. The protein resides in the endoplasmic reticulum-Golgi intermediate compartment membrane. It is found in the endosome. Probable cell surface receptor that plays several roles in cellular fusion, cell differentiation, bone and immune homeostasis. Plays a role in TNFSF11-mediated osteoclastogenesis. Cooperates with OCSTAMP in modulating cell-cell fusion in both osteoclasts and foreign body giant cells (FBGCs). Participates in osteoclast bone resorption. Involved in inducing the expression of tartrate-resistant acid phosphatase in osteoclast precursors. Plays a role in haematopoietic stem cell differentiation of bone marrow cells toward the myeloid lineage. Inhibits the development of neutrophilic granulocytes. Plays also a role in the regulation of dendritic cell (DC) antigen presentation activity by controlling phagocytic activity. Involved in the maintenance of immune self-tolerance and avoidance of autoimmune reactions. The protein is Dendritic cell-specific transmembrane protein (DCSTAMP) of Homo sapiens (Human).